Here is a 317-residue protein sequence, read N- to C-terminus: Probable F-box protein At2g36090 (317 aa).

Residues 25–74 (IESHILTRLDGATLASVSCASSHLHHLASNEILWSKICRSTWPSCSGGSR) form the F-box domain.

This Arabidopsis thaliana (Mouse-ear cress) protein is Probable F-box protein At2g36090.